The chain runs to 308 residues: ATP synthase gamma chain (308 aa).

Belongs to the ATPase gamma chain family. As to quaternary structure, F-type ATPases have 2 components, CF(1) - the catalytic core - and CF(0) - the membrane proton channel. CF(1) has five subunits: alpha(3), beta(3), gamma(1), delta(1), epsilon(1). CF(0) has three main subunits: a, b and c.

Its subcellular location is the cell inner membrane. Functionally, produces ATP from ADP in the presence of a proton gradient across the membrane. The gamma chain is believed to be important in regulating ATPase activity and the flow of protons through the CF(0) complex. The polypeptide is ATP synthase gamma chain (Salinibacter ruber (strain DSM 13855 / M31)).